Here is a 179-residue protein sequence, read N- to C-terminus: Inner membrane-spanning protein YciB (179 aa).

5 consecutive transmembrane segments (helical) span residues 22–42 (IYVA…FTWF), 50–70 (MTLI…VFHN), 76–96 (WKVT…QLVL), 121–141 (LAWA…AFWL), and 149–169 (FKVF…GVYI).

This sequence belongs to the YciB family.

The protein resides in the cell inner membrane. In terms of biological role, plays a role in cell envelope biogenesis, maintenance of cell envelope integrity and membrane homeostasis. The polypeptide is Inner membrane-spanning protein YciB (Serratia proteamaculans (strain 568)).